Consider the following 225-residue polypeptide: UPF0502 protein Ajs_3392 (225 aa).

The protein belongs to the UPF0502 family.

This chain is UPF0502 protein Ajs_3392, found in Acidovorax sp. (strain JS42).